The chain runs to 1108 residues: cGMP-inhibited 3',5'-cyclic phosphodiesterase 3B (1108 aa).

Residues 1 to 11 (MRKDERERDTP) show a composition bias toward basic and acidic residues. The disordered stretch occupies residues 1–32 (MRKDERERDTPAMRSPPPPPPPATATAASPPE). The tract at residues 1-32 (MRKDERERDTPAMRSPPPPPPPATATAASPPE) is interaction with RAPGEF3. The segment covering 14–23 (RSPPPPPPPA) has biased composition (pro residues). Serine 15 is subject to Phosphoserine. 6 consecutive transmembrane segments (helical) span residues 73 to 93 (AGARLSLAALAAFVLAALLGA), 114 to 134 (LSLSPLFSIACAFFFLTCFLT), 144 to 164 (AGSWWLLALPACCYLGDFAAW), 175 to 195 (AAAAAGRLCLVLSCVGLLTLA), 204 to 224 (VLVLLFAGLVWWVSFSGLGAL), and 231 to 251 (LLSCLVGGAGCLLALGLDHFF). Serine 279 carries the phosphoserine; by PKB/AKT1 or PKB/AKT2 modification. A phosphoserine mark is found at serine 280 and serine 427. The tract at residues 405 to 448 (DRKLHKGLSSKPSFPTAQLRRSSGASGLLTSEHHSRWDRSGGKR) is disordered. Positions 414–433 (SKPSFPTAQLRRSSGASGLL) are enriched in polar residues. Residues 421 to 445 (AQLRRSSGASGLLTSEHHSRWDRSG) form an interaction with PIK3R6 region. The segment covering 435–445 (SEHHSRWDRSG) has biased composition (basic and acidic residues). The PDEase domain occupies 633 to 1070 (PNIDQEVLLD…KIWKEIIEEE (438 aa)). The active-site Proton donor is histidine 719. Histidine 719 is a binding site for AMP. Positions 723, 803, 804, and 919 each coordinate Mg(2+). AMP contacts are provided by aspartate 804, aspartate 919, and glutamine 970. Acidic residues predominate over residues 999–1033 (EEGDDTESDDDDDDDDDDDDDDDEELDSDDEETED). The tract at residues 999–1042 (EEGDDTESDDDDDDDDDDDDDDDEELDSDDEETEDNLNPKPQRR) is disordered.

The protein belongs to the cyclic nucleotide phosphodiesterase family. PDE3 subfamily. As to quaternary structure, homodimer. Interacts with PIK3CG; regulates PDE3B activity and thereby cAMP levels in cells. Interacts with RAPGEF3 and PIK3R6; form a signaling complex that regulates phosphatidylinositol 3-kinase gamma in angiogenesis. Interacts with ABHD15; this interaction regulates PDE3B's stability and expression and, thereby, impacts the antilipolytic action of insulin. Mg(2+) serves as cofactor. It depends on Mn(2+) as a cofactor. In terms of processing, phosphorylation at Ser-279 mediates insulin-induced activation of PDE3B. Abundant in adipose tissues.

The protein localises to the membrane. It catalyses the reaction a nucleoside 3',5'-cyclic phosphate + H2O = a nucleoside 5'-phosphate + H(+). It carries out the reaction 3',5'-cyclic AMP + H2O = AMP + H(+). The enzyme catalyses 3',5'-cyclic GMP + H2O = GMP + H(+). Inhibited by cGMP. Cyclic nucleotide phosphodiesterase with a dual-specificity for the second messengers cAMP and cGMP, which are key regulators of many important physiological processes. Regulates angiogenesis by inhibiting the cAMP-dependent guanine nucleotide exchange factor RAPGEF3 and downstream phosphatidylinositol 3-kinase gamma-mediated signaling. Controls cardiac contractility by reducing cAMP concentration in cardiocytes. In Rattus norvegicus (Rat), this protein is cGMP-inhibited 3',5'-cyclic phosphodiesterase 3B.